Reading from the N-terminus, the 156-residue chain is Small ribosomal subunit protein uS7 (156 aa).

The protein belongs to the universal ribosomal protein uS7 family. As to quaternary structure, part of the 30S ribosomal subunit. Contacts proteins S9 and S11.

One of the primary rRNA binding proteins, it binds directly to 16S rRNA where it nucleates assembly of the head domain of the 30S subunit. Is located at the subunit interface close to the decoding center, probably blocks exit of the E-site tRNA. This chain is Small ribosomal subunit protein uS7, found in Pseudomonas syringae pv. tomato (strain ATCC BAA-871 / DC3000).